A 2672-amino-acid chain; its full sequence is eIF-2-alpha kinase activator GCN1 (2672 aa).

HEAT repeat units lie at residues 5 to 42, 79 to 117, 174 to 211, 227 to 267, 329 to 366, 372 to 410, 509 to 549, 611 to 648, 706 to 745, 902 to 932, and 933 to 970; these read LNWE…QETL, NLEP…WINS, CIFQ…YSKL, QAAL…NPPS, FASS…KISN, EDLT…THYE, HGHA…NSSI, KYVT…IFNI, IQPN…EEGV, QDYL…IDSI, and SLTY…EEDE. An HEAT 12; degenerate repeat occupies 975 to 994; sequence LLLAMEIISVHAEAFEDPSI. Residues 995 to 1030 form an HEAT 13; degenerate repeat; it reads PRISIVEVLLSLLSLPSKAKIAKDCFNALCQSISVA. 32 HEAT repeats span residues 1031–1067, 1099–1138, 1185–1224, 1243–1281, 1284–1321, 1363–1401, 1405–1442, 1444–1480, 1484–1521, 1523–1559, 1561–1598, 1603–1640, 1641–1679, 1681–1717, 1721–1758, 1760–1796, 1825–1862, 1863–1903, 1905–1942, 1947–1984, 1985–2024, 2026–2055, 2057–2095, 2097–2134, 2138–2175, 2206–2243, 2250–2286, 2290–2328, 2347–2384, 2392–2429, 2450–2487, and 2506–2546; these read PNQE…LEPF, VVND…FTSE, STVA…REPI, QNSK…HLQQ, ARIH…QFKQ, LSEF…SLGK, PYVI…HTTG, GVKK…LDPT, ASLS…VIRN, EIQK…HYID, PSLA…LVDT, PYLQ…RLGE, EQFP…GLGL, KLDE…CFGS, PYIN…NYAT, AVDL…QVTG, DRRD…NTPR, AVKE…RVGG, ALSQ…SAST, QFQS…VVGK, TAVD…VIFP, LIPT…SALY, RLSI…SVND, EGLH…KTVL, VYIP…KVDK, RGPN…KTPA, VSVI…KIPM, PFIP…HQPR, GVKT…EEML, VAYA…ETGK, GLID…LEGE, and ENIN…FKFD. Positions 1330–1641 are EF3-like region; the sequence is LMEKLLNPTV…GALVERLGEE (312 aa). Residues 2207-2356 are RWDBD region; it reads GPNCVLPIFL…GVKTAMLKAL (150 aa).

Belongs to the GCN1 family. In terms of assembly, interacts (via N- and C-terminus) with GCN2 (via N-terminal RWD domain); this interaction stimulates GCN2 kinase activity in a GCN20-dependent manner in response to amino acid starvation. Interacts (via C-terminus) with GCN20 (via N-terminus); this interaction stimulates GCN2 kinase activity in response to amino acid starvation. The GCN1-GCN20 complex interacts with GCN2 on translating ribosomes in amino acid-starved cells; GCN1 may bind near the ribosomal A-site and promotes the transfer of uncharged tRNAs from the A-site to the tRNA-binding domain in GCN2 for its subsequent kinase activation, and hence allowing GCN4 translational activation and derepression of amino acid biosynthetic genes. Interacts (via C-terminus) with YIH1 (via N-terminus); this interaction reduces the GCN1-GCN20 complex formation and prevents the interaction of GCN1 with GCN2 and GCN2 kinase activation in amino acid-starved cells. Interacts with GIR2; this interaction prevents the interaction of GCN1 with GCN2 and GCN2 kinase activation in amino acid-starved cells. Interacts (via middle region) with RPS10A and RPS10B; these interactions are direct and promote GCN2 kinase activation. Associates (via N-terminus) with ribosomes; this association is stimulated in a ATP- and GCN20-dependent manner and is necessary to activate GCN2 kinase activity.

Its subcellular location is the cytoplasm. In terms of biological role, ribosome collision sensor that activates a translation quality control pathway when a ribosome has stalled during translation. Directly binds to the ribosome and acts as a sentinel for colliding ribosomes. GCN1 also acts as a positive activator of the integrated stress response (ISR) by mediating activation of GCN2 in response to low amino acid, carbon, or purine availability. Component of the GCN1-GCN20 complex that forms a complex with GCN2 on translating ribosomes: during this process, GCN1 acts as a chaperone to facilitate delivery of uncharged tRNAs that enter the A-site of ribosomes to the tRNA-binding domain of GCN2, and hence stimulating GCN2 kinase activity, leading to phosphorylation of eukaryotic translation initiation factor 2 (eIF-2-alpha/SUI2). eIF-2-alpha/SUI2 phosphorylation converts eIF-2-alpha/SUI2 into a global protein synthesis inhibitor, leading to a global attenuation of cap-dependent translation, and thus to a reduced overall utilization of amino acids, while concomitantly initiating the preferential translation of ISR-specific mRNAs, such as the transcriptional activator GCN4, and hence allowing GCN4-mediated reprogramming of amino acid biosynthetic gene expression to alleviate nutrient depletion. This chain is eIF-2-alpha kinase activator GCN1, found in Saccharomyces cerevisiae (strain ATCC 204508 / S288c) (Baker's yeast).